Consider the following 946-residue polypeptide: MKRRAGLGGSMRSVVGFLSQRGLHGDPLLTQDFQRRRLRGCRNLYKKDLLGHFGCVNAIEFSNNGGQWLVSGGDDRRVLLWHMEQAIHSRVKPIQLKGEHHSNIFCLAFNSGNTKVFSGGNDEQVILHDVESSETLDVFAHEDAVYGLSVSPVNDNIFASSSDDGRVLIWDIRESPHGEPFCLANYPSAFHSVMFNPVEPRLLATANSKEGVGLWDIRKPQSSLLRYGGNLSLQSAMSVRFNSNGTQLLALRRRLPPVLYDIHSRLPVFQFDNQGYFNSCTMKSCCFAGDRDQYILSGSDDFNLYMWKIPADPEAGGIGRVVNGAFMVLKGHRSIVNQVRFNPHTYMICSSGVEKIIKIWSPYKQPGCTGDLDGRIEDDSRCLYTHEEYISLVLNSGSGLSHDYANQSVQEDPRMMAFFDSLVRREIEGWSSDSDSDLSESTILQLHAGVSERSGYTDSESSASLPRSPPPTVDESADNAFHLGPLRVTTTNAVASTPATPTCEDASSRQQRLSALRRYQDKRLLALSNESDSEENVCEAELDTDLFPRPRSPSPEDGSSSPSSSTSSEDEEELNQRRATTRQRNAMRRRQKTARDERPTGPAKSTNTYIGEDNYDYPQIKVDDLSPSPDSSPERSASTLDVQPSRAPPAANMESVERKIYKAYKWLRCSYISYSNNKDGETSLMAEEADEGRAGTSHKDNPTPSSSKEACLTATAQRDQDLPSEGCSSDACKEGTSAGNPNSGAGHEHSSHPWAEVPEGTSQDTNNSGPLEHSFETKKLNGKALSKALSSRAEEPPASPGPKASGSTLNSASGNCPRTQSDDSEERSLDTVCANHNNGRLHPRPLHPHNNGQSSGELETVACSSPGHLDTDHDSPSLTGTFLHKDCCGSEMACETPSAGMREDPPDPSGLDSSKVVHGQSGLKRHRIELEDTESENSSSEKKLKT.

WD repeat units follow at residues 51–91 (GHFG…HSRV), 99–139 (EHHS…LDVF), 140–180 (AHED…HGEP), 185–225 (NYPS…SSLL), 277–317 (FNSC…EAGG), and 331–370 (GHRS…GCTG). The tract at residues 449-478 (GVSERSGYTDSESSASLPRSPPPTVDESAD) is disordered. The segment covering 454–465 (SGYTDSESSASL) has biased composition (polar residues). Threonine 500 bears the Phosphothreonine mark. 3 disordered regions span residues 527–656 (LSNE…MESV), 675–860 (SNNK…ELET), and 894–946 (CETP…KLKT). Phosphoserine occurs at positions 531 and 533. Over residues 531–544 (SDSEENVCEAELDT) the composition is skewed to acidic residues. The span at 555 to 567 (PEDGSSSPSSSTS) shows a compositional bias: low complexity. Basic residues predominate over residues 579-592 (ATTRQRNAMRRRQK). The segment covering 625–638 (LSPSPDSSPERSAS) has biased composition (low complexity). Serine 626, serine 628, and serine 645 each carry phosphoserine. Basic and acidic residues predominate over residues 691-701 (EGRAGTSHKDN). Composition is skewed to polar residues over residues 760–769 (GTSQDTNNSG) and 808–819 (TLNSASGNCPRT).

As to quaternary structure, interacts with DDB1, CUL4A or CUL4B. Interacts with L3MBTL3. Interacts with SOX2. Interacts with DNMT1. Interacts with E2F1.

It participates in protein modification; protein ubiquitination. Its function is as follows. Is a substrate receptor for the CUL4-DDB1 E3 ubiquitin-protein ligase complex (CRL4), involved in the ubiquitination of a set of methylated non-histone proteins, including SOX2. The complex CRL4-DCAF5 is also involved in the ubiquitination of methylated DNMT1 and E2F1. The polypeptide is DDB1- and CUL4-associated factor 5 (Dcaf5) (Mus musculus (Mouse)).